Here is a 427-residue protein sequence, read N- to C-terminus: 5-hydroxybenzimidazole synthase BzaA (427 aa).

The protein belongs to the ThiC family. 5-hydroxybenzimidazole synthase subfamily. Requires [4Fe-4S] cluster as cofactor.

The catalysed reaction is 5-amino-1-(5-phospho-beta-D-ribosyl)imidazole + AH2 + S-adenosyl-L-methionine = 5-hydroxybenzimidazole + 5'-deoxyadenosine + formate + L-methionine + A + NH4(+) + phosphate + 2 H(+). Its pathway is cofactor biosynthesis; adenosylcobalamin biosynthesis. Functionally, together with BzaB, catalyzes the conversion of aminoimidazole ribotide (AIR) to 5-hydroxybenzimidazole (5-HBI) in a radical S-adenosyl-L-methionine (SAM)-dependent reaction. Is thus involved in the anaerobic biosynthesis of dimethylbenzimidazole (DMB), the lower axial ligand of vitamin B12 (cobalamin). Requires BzaB for catalytic activity, as BzaA alone displays no activity. The sequence is that of 5-hydroxybenzimidazole synthase BzaA from Eubacterium limosum.